A 375-amino-acid polypeptide reads, in one-letter code: Acetylornithine aminotransferase (375 aa).

Residues 93–94 (GT) and Phe120 each bind pyridoxal 5'-phosphate. Residue Arg123 participates in N(2)-acetyl-L-ornithine binding. 205-208 (DEVQ) is a binding site for pyridoxal 5'-phosphate. Lys234 is subject to N6-(pyridoxal phosphate)lysine. Thr262 is a binding site for N(2)-acetyl-L-ornithine. Thr263 is a binding site for pyridoxal 5'-phosphate.

This sequence belongs to the class-III pyridoxal-phosphate-dependent aminotransferase family. ArgD subfamily. In terms of assembly, homodimer. It depends on pyridoxal 5'-phosphate as a cofactor.

The protein localises to the cytoplasm. It carries out the reaction N(2)-acetyl-L-ornithine + 2-oxoglutarate = N-acetyl-L-glutamate 5-semialdehyde + L-glutamate. It participates in amino-acid biosynthesis; L-arginine biosynthesis; N(2)-acetyl-L-ornithine from L-glutamate: step 4/4. The polypeptide is Acetylornithine aminotransferase (Staphylococcus epidermidis (strain ATCC 35984 / DSM 28319 / BCRC 17069 / CCUG 31568 / BM 3577 / RP62A)).